Here is a 280-residue protein sequence, read N- to C-terminus: 4-hydroxy-3-methylbut-2-enyl diphosphate reductase (280 aa).

Cys12 lines the [4Fe-4S] cluster pocket. (2E)-4-hydroxy-3-methylbut-2-enyl diphosphate contacts are provided by His40 and His72. Positions 40 and 72 each coordinate dimethylallyl diphosphate. His40 and His72 together coordinate isopentenyl diphosphate. Residue Cys94 participates in [4Fe-4S] cluster binding. His122 contributes to the (2E)-4-hydroxy-3-methylbut-2-enyl diphosphate binding site. Dimethylallyl diphosphate is bound at residue His122. Isopentenyl diphosphate is bound at residue His122. Glu124 (proton donor) is an active-site residue. (2E)-4-hydroxy-3-methylbut-2-enyl diphosphate is bound at residue Thr160. Residue Cys188 coordinates [4Fe-4S] cluster. (2E)-4-hydroxy-3-methylbut-2-enyl diphosphate-binding residues include Ser216, Asn218, and Ser260. Positions 216, 218, and 260 each coordinate dimethylallyl diphosphate. Isopentenyl diphosphate-binding residues include Ser216, Asn218, and Ser260.

This sequence belongs to the IspH family. [4Fe-4S] cluster is required as a cofactor.

It catalyses the reaction isopentenyl diphosphate + 2 oxidized [2Fe-2S]-[ferredoxin] + H2O = (2E)-4-hydroxy-3-methylbut-2-enyl diphosphate + 2 reduced [2Fe-2S]-[ferredoxin] + 2 H(+). It carries out the reaction dimethylallyl diphosphate + 2 oxidized [2Fe-2S]-[ferredoxin] + H2O = (2E)-4-hydroxy-3-methylbut-2-enyl diphosphate + 2 reduced [2Fe-2S]-[ferredoxin] + 2 H(+). Its pathway is isoprenoid biosynthesis; dimethylallyl diphosphate biosynthesis; dimethylallyl diphosphate from (2E)-4-hydroxy-3-methylbutenyl diphosphate: step 1/1. It participates in isoprenoid biosynthesis; isopentenyl diphosphate biosynthesis via DXP pathway; isopentenyl diphosphate from 1-deoxy-D-xylulose 5-phosphate: step 6/6. In terms of biological role, catalyzes the conversion of 1-hydroxy-2-methyl-2-(E)-butenyl 4-diphosphate (HMBPP) into a mixture of isopentenyl diphosphate (IPP) and dimethylallyl diphosphate (DMAPP). Acts in the terminal step of the DOXP/MEP pathway for isoprenoid precursor biosynthesis. This chain is 4-hydroxy-3-methylbut-2-enyl diphosphate reductase, found in Pelobacter propionicus (strain DSM 2379 / NBRC 103807 / OttBd1).